A 104-amino-acid chain; its full sequence is Thioredoxin (104 aa).

Positions 2–104 (KQVSDASFEE…KLFEWVEASV (103 aa)) constitute a Thioredoxin domain. Cysteine 29 and cysteine 32 are oxidised to a cystine.

Belongs to the thioredoxin family.

Functionally, participates in various redox reactions through the reversible oxidation of its active center dithiol to a disulfide and catalyzes dithiol-disulfide exchange reactions. The chain is Thioredoxin (trxA) from Rhodospirillum rubrum.